We begin with the raw amino-acid sequence, 259 residues long: Thiazole synthase (259 aa).

Catalysis depends on K99, which acts as the Schiff-base intermediate with DXP. 1-deoxy-D-xylulose 5-phosphate-binding positions include G161, 187–188 (AG), and 209–210 (NT).

Belongs to the ThiG family. In terms of assembly, homotetramer. Forms heterodimers with either ThiH or ThiS.

Its subcellular location is the cytoplasm. The catalysed reaction is [ThiS sulfur-carrier protein]-C-terminal-Gly-aminoethanethioate + 2-iminoacetate + 1-deoxy-D-xylulose 5-phosphate = [ThiS sulfur-carrier protein]-C-terminal Gly-Gly + 2-[(2R,5Z)-2-carboxy-4-methylthiazol-5(2H)-ylidene]ethyl phosphate + 2 H2O + H(+). It participates in cofactor biosynthesis; thiamine diphosphate biosynthesis. Catalyzes the rearrangement of 1-deoxy-D-xylulose 5-phosphate (DXP) to produce the thiazole phosphate moiety of thiamine. Sulfur is provided by the thiocarboxylate moiety of the carrier protein ThiS. In vitro, sulfur can be provided by H(2)S. The sequence is that of Thiazole synthase from Nitratiruptor sp. (strain SB155-2).